Consider the following 376-residue polypeptide: Heme chaperone HemW (376 aa).

The Radical SAM core domain maps to 1–233 (MFTLPPISLY…DKLLKKAGYK (233 aa)). Y10 contributes to the S-adenosyl-L-methionine binding site. C16, C20, and C23 together coordinate [4Fe-4S] cluster. Residues G66, 67 to 68 (GT), E99, Q126, R138, and D162 contribute to the S-adenosyl-L-methionine site.

It belongs to the anaerobic coproporphyrinogen-III oxidase family. HemW subfamily. The cofactor is [4Fe-4S] cluster.

Its subcellular location is the cytoplasm. Its function is as follows. Probably acts as a heme chaperone, transferring heme to an unknown acceptor. Binds one molecule of heme per monomer, possibly covalently. Binds 1 [4Fe-4S] cluster. The cluster is coordinated with 3 cysteines and an exchangeable S-adenosyl-L-methionine. The sequence is that of Heme chaperone HemW from Buchnera aphidicola subsp. Acyrthosiphon pisum (strain APS) (Acyrthosiphon pisum symbiotic bacterium).